The sequence spans 249 residues: V-type proton ATPase subunit D 2 (249 aa).

Belongs to the V-ATPase D subunit family. In terms of assembly, V-ATPase is a heteromultimeric enzyme made up of two complexes: the ATP-hydrolytic V1 complex and the proton translocation V0 complex. The V1 complex consists of three catalytic AB heterodimers that form a heterohexamer, three peripheral stalks each consisting of EG heterodimers, one central rotor including subunits D and F, and the regulatory subunits C and H. The proton translocation complex V0 consists of the proton transport subunit a, a ring of proteolipid subunits c9c'', rotary subunit d, subunits e and f, and the accessory subunits VhaAC45 and ATP6AP2.

In terms of biological role, subunit of the V1 complex of vacuolar(H+)-ATPase (V-ATPase), a multisubunit enzyme composed of a peripheral complex (V1) that hydrolyzes ATP and a membrane integral complex (V0) that translocates protons. V-ATPase is responsible for acidifying and maintaining the pH of intracellular compartments and in some cell types, is targeted to the plasma membrane, where it is responsible for acidifying the extracellular environment. This chain is V-type proton ATPase subunit D 2 (Vha36-3), found in Drosophila melanogaster (Fruit fly).